A 214-amino-acid chain; its full sequence is Ubiquitin-conjugating enzyme E2 21 (214 aa).

Residues 21 to 168 (ARVTRKCKEV…AVYWTSYFAN (148 aa)) form the UBC core domain. Cys106 serves as the catalytic Glycyl thioester intermediate. One can recognise a UBA domain in the interval 172–214 (DVEPDFNRKVGRLIEMGIRETEAIVYLSCNNWKLEQALQFIFD).

It belongs to the ubiquitin-conjugating enzyme family.

It carries out the reaction S-ubiquitinyl-[E1 ubiquitin-activating enzyme]-L-cysteine + [E2 ubiquitin-conjugating enzyme]-L-cysteine = [E1 ubiquitin-activating enzyme]-L-cysteine + S-ubiquitinyl-[E2 ubiquitin-conjugating enzyme]-L-cysteine.. The protein operates within protein modification; protein ubiquitination. Its function is as follows. Acts with E3 ubiquitin-protein ligase trim-21 to catalyze the 'Lys-48'-linked polyubiquitination of ced-1, promoting its proteasomal degradation to maintain appropriate ced-1 levels for apoptotic cell clearance. In Caenorhabditis elegans, this protein is Ubiquitin-conjugating enzyme E2 21 (ubc-21).